Here is a 369-residue protein sequence, read N- to C-terminus: Aminomethyltransferase (369 aa).

It belongs to the GcvT family. As to quaternary structure, the glycine cleavage system is composed of four proteins: P, T, L and H.

The catalysed reaction is N(6)-[(R)-S(8)-aminomethyldihydrolipoyl]-L-lysyl-[protein] + (6S)-5,6,7,8-tetrahydrofolate = N(6)-[(R)-dihydrolipoyl]-L-lysyl-[protein] + (6R)-5,10-methylene-5,6,7,8-tetrahydrofolate + NH4(+). Its function is as follows. The glycine cleavage system catalyzes the degradation of glycine. In Xanthomonas campestris pv. campestris (strain 8004), this protein is Aminomethyltransferase.